Here is a 79-residue protein sequence, read N- to C-terminus: Acyl carrier protein (79 aa).

The 76-residue stretch at 2-77 (SEVADKVKKI…DAVEYIEKQK (76 aa)) folds into the Carrier domain. An O-(pantetheine 4'-phosphoryl)serine modification is found at Ser37.

It belongs to the acyl carrier protein (ACP) family. In terms of processing, 4'-phosphopantetheine is transferred from CoA to a specific serine of apo-ACP by AcpS. This modification is essential for activity because fatty acids are bound in thioester linkage to the sulfhydryl of the prosthetic group.

Its subcellular location is the cytoplasm. The protein operates within lipid metabolism; fatty acid biosynthesis. In terms of biological role, carrier of the growing fatty acid chain in fatty acid biosynthesis. The chain is Acyl carrier protein from Granulibacter bethesdensis (strain ATCC BAA-1260 / CGDNIH1).